The sequence spans 211 residues: Small ribosomal subunit protein eS8 (211 aa).

It belongs to the eukaryotic ribosomal protein eS8 family.

This is Small ribosomal subunit protein eS8 (rps8) from Dictyostelium discoideum (Social amoeba).